Reading from the N-terminus, the 351-residue chain is Phosphate acyltransferase (351 aa).

The protein belongs to the PlsX family. As to quaternary structure, homodimer. Probably interacts with PlsY.

The protein localises to the cytoplasm. The catalysed reaction is a fatty acyl-[ACP] + phosphate = an acyl phosphate + holo-[ACP]. Its pathway is lipid metabolism; phospholipid metabolism. Functionally, catalyzes the reversible formation of acyl-phosphate (acyl-PO(4)) from acyl-[acyl-carrier-protein] (acyl-ACP). This enzyme utilizes acyl-ACP as fatty acyl donor, but not acyl-CoA. The chain is Phosphate acyltransferase from Gloeothece citriformis (strain PCC 7424) (Cyanothece sp. (strain PCC 7424)).